The sequence spans 99 residues: Class II hydrophobin 2 (99 aa).

A signal peptide spans 1–15; sequence MKFFVVAALFAGALA. Intrachain disulfides connect Cys30–Cys79 and Cys40–Cys70.

It belongs to the cerato-ulmin hydrophobin family. Homotetramer. Further self-assembles to form highly ordered films at water-air interfaces through intermolecular interactions.

The protein resides in the secreted. The protein localises to the cell wall. Functionally, aerial growth, conidiation, and dispersal of filamentous fungi in the environment rely upon a capability of their secreting small amphipathic proteins called hydrophobins (HPBs) with low sequence identity. Class I can self-assemble into an outermost layer of rodlet bundles on aerial cell surfaces, conferring cellular hydrophobicity that supports fungal growth, development and dispersal; whereas Class II form highly ordered films at water-air interfaces through intermolecular interactions but contribute nothing to the rodlet structure. HYD2 is a class II hydrophobin that contributes to the fruiting body development. This chain is Class II hydrophobin 2, found in Cordyceps militaris (Caterpillar fungus).